The chain runs to 224 residues: Metalloproteinase inhibitor 4 (224 aa).

An N-terminal signal peptide occupies residues 1–29 (MPWSPLAALSWALVLRLLALLWPPGRGEA). Zn(2+) is bound at residue cysteine 30. Involved in metalloproteinase-binding stretches follow at residues 30-33 (CSCA) and 99-100 (SS). Cystine bridges form between cysteine 30/cysteine 102, cysteine 32/cysteine 131, cysteine 42/cysteine 156, cysteine 158/cysteine 205, cysteine 163/cysteine 168, and cysteine 176/cysteine 197. Residues 30 to 156 (CSCAPAHPQQ…SLNHHYHQNC (127 aa)) form the NTR domain.

Belongs to the protease inhibitor I35 (TIMP) family. Expressed in brain, heart, ovary and skeletal muscle.

Its subcellular location is the secreted. Functionally, complexes with metalloproteinases (such as collagenases) and irreversibly inactivates them by binding to their catalytic zinc cofactor. The sequence is that of Metalloproteinase inhibitor 4 (Timp4) from Mus musculus (Mouse).